The sequence spans 614 residues: ETS-related transcription factor Elf-1 (614 aa).

Phosphoserine occurs at positions 110, 163, 167, and 168. The segment at 159–199 (TYAHSPGPSSPEQPKRKKGRKTKPPRPDSPTTTPNISVKKK) is disordered. Positions 173-182 (KRKKGRKTKP) are enriched in basic residues. Position 187 is a phosphoserine (Ser187). Residue Thr190 is modified to Phosphothreonine. Positions 208-290 (IYLWEFLLAL…EGQRLVYQFK (83 aa)) form a DNA-binding region, ETS. The interval 303–371 (DPSCSIESSD…VQPSEALRTV (69 aa)) is disordered. Over residues 310 to 335 (SSDPSLSSTATSSRNPASRSRASSSP) the composition is skewed to low complexity. Ser430 is modified (phosphoserine).

It belongs to the ETS family. As to quaternary structure, binds to the underphosphorylated form of RB. May interact with other transcription factors in order to regulate specific genes. Interacts with RUNX1.

The protein resides in the nucleus. Its function is as follows. Transcription factor that activates the LYN and BLK promoters. The protein is ETS-related transcription factor Elf-1 (ELF1) of Bos taurus (Bovine).